We begin with the raw amino-acid sequence, 196 residues long: Probable GTP-binding protein EngB (196 aa).

One can recognise an EngB-type G domain in the interval 21-195; that stretch reads DVSEICLIGR…YELIDKLLGS (175 aa). Residues 29-36, 56-60, 75-78, 142-145, and 174-176 contribute to the GTP site; these read GRSNVGKS, GKTRL, DAPG, TKLD, and ISN. Ser-36 and Thr-58 together coordinate Mg(2+).

The protein belongs to the TRAFAC class TrmE-Era-EngA-EngB-Septin-like GTPase superfamily. EngB GTPase family. The cofactor is Mg(2+).

Its function is as follows. Necessary for normal cell division and for the maintenance of normal septation. The protein is Probable GTP-binding protein EngB of Mycoplasma mycoides subsp. mycoides SC (strain CCUG 32753 / NCTC 10114 / PG1).